Here is a 474-residue protein sequence, read N- to C-terminus: 4-O-methyl-glucuronoyl methylesterase (474 aa).

Positions 1 to 17 (MFKPSFVALALVSYATA) are cleaved as a signal peptide. A CBM1 domain is found at 19-55 (ASAPQWGQCGGIGWTGPTACPSGWACQQLNAYYSQCL). A disordered region spans residues 61 to 91 (APARTTAAPPPPPATTAAPPPPTTSAPTGSS). Residues 68–84 (APPPPPATTAAPPPPTT) are compositionally biased toward pro residues. Asn120 carries N-linked (GlcNAc...) asparagine glycosylation. Residues 284 to 289 (GCSRDG) carry the GXSYXG catalytic site motif motif. Cystine bridges form between Cys285–Cys421 and Cys317–Cys393. Ser286 acts as the Nucleophile in catalysis. Positions 290, 332, 340, and 384 each coordinate substrate. Residue His420 is the Proton donor/acceptor of the active site.

The protein belongs to the carbohydrate esterase 15 (CE15) family. Post-translationally, N-glycosylated.

The protein localises to the secreted. It catalyses the reaction a 4-O-methyl-alpha-D-glucuronosyl ester derivative + H2O = 4-O-methyl-alpha-D-glucuronate derivative + an alcohol + H(+). Functionally, glucuronoyl esterase which may play a significant role in biomass degradation, as it is considered to disconnect hemicellulose from lignin through the hydrolysis of the ester bond between 4-O-methyl-D-glucuronic acid residues of glucuronoxylans and aromatic alcohols of lignin. The protein is 4-O-methyl-glucuronoyl methylesterase of Cerrena unicolor (Canker rot fungus).